Consider the following 504-residue polypeptide: MEEFQRYFELDRYQQHDFLYPLIFQEYIYALAHDHGLNRSIVLENPGYDNKSSLLIVKRLITRMYQQNHYIISSNDSNQNPFFGHNKNLYSQMISEGFVVIVEIPFSLRLRSSLEGKEIVKSQNLQSIHSIFPFLEDKFLHLNYVXDILIPYPIHLEILVQPLRHWVKDASSLHLLRFFLHEYRNWNSLITPKRPSAYFSKRNQRLFLFLYNSHVCEYESIFLLTQSSHLRSTSSGALLERIYFYGKLEHSVEVFAKDFQAILWLFKDPFIHYLRYQGKSILASKGTSLLMNKWKYYLLNCWQCHFYVWSQPRRIYINQLSNHSLDFLGYLSSVRLNPSMVRSQMIENSFLIDNAIKKFDTIVPIIPMIQSLAKAKFCNVLGHPISKPVWADLSDSDIIDRFGRICRNLSHYHSGSSKKKTLYRIKYILRLSCARTLARKHKSTVRAFLKRVGSELLEEFFTEEEQVLSLTFPRAFSTSTSRGLYRRRIWYLDIICINDLANHE.

This sequence belongs to the intron maturase 2 family. MatK subfamily.

The protein resides in the plastid. The protein localises to the chloroplast. Functionally, usually encoded in the trnK tRNA gene intron. Probably assists in splicing its own and other chloroplast group II introns. The chain is Maturase K from Mentzelia laevicaulis (Blazing star).